Reading from the N-terminus, the 317-residue chain is L-lactate dehydrogenase 1 (317 aa).

NAD(+)-binding positions include valine 17, aspartate 38, lysine 43, tyrosine 69, and 83–84 (GA). Substrate-binding residues include glutamine 86 and arginine 92. NAD(+) contacts are provided by residues serine 105, 122 to 124 (ATN), and serine 147. A substrate-binding site is contributed by 124 to 127 (NPVD). 152-155 (DSAR) serves as a coordination point for substrate. Histidine 179 (proton acceptor) is an active-site residue. Tyrosine 223 carries the post-translational modification Phosphotyrosine. A substrate-binding site is contributed by threonine 232.

Belongs to the LDH/MDH superfamily. LDH family. Homotetramer.

The protein resides in the cytoplasm. The catalysed reaction is (S)-lactate + NAD(+) = pyruvate + NADH + H(+). The protein operates within fermentation; pyruvate fermentation to lactate; (S)-lactate from pyruvate: step 1/1. In terms of biological role, catalyzes the conversion of lactate to pyruvate (Potential). Appears to be the primary factor that allows S.aureus growth during nitrosative stress in both aerobically and anaerobically cultured cells. The chain is L-lactate dehydrogenase 1 from Staphylococcus aureus (strain JH1).